Reading from the N-terminus, the 118-residue chain is UPF0102 protein Sde_3146 (118 aa).

Belongs to the UPF0102 family.

The polypeptide is UPF0102 protein Sde_3146 (Saccharophagus degradans (strain 2-40 / ATCC 43961 / DSM 17024)).